Consider the following 101-residue polypeptide: Small ribosomal subunit protein uS14 (101 aa).

It belongs to the universal ribosomal protein uS14 family. Part of the 30S ribosomal subunit. Contacts proteins S3 and S10.

Functionally, binds 16S rRNA, required for the assembly of 30S particles and may also be responsible for determining the conformation of the 16S rRNA at the A site. The sequence is that of Small ribosomal subunit protein uS14 from Polynucleobacter necessarius subsp. necessarius (strain STIR1).